Reading from the N-terminus, the 375-residue chain is Growth/differentiation factor 8 (375 aa).

An N-terminal signal peptide occupies residues 1–23; the sequence is MQKLQIYVYIYLFMLIVAGPVDL. The propeptide occupies 24 to 266; it reads NENSEQKENV…VTDTPKRSRR (243 aa). A glycan (N-linked (GlcNAc...) asparagine) is linked at Asn71. 4 disulfides stabilise this stretch: Cys272–Cys282, Cys281–Cys340, Cys309–Cys372, and Cys313–Cys374.

This sequence belongs to the TGF-beta family. In terms of assembly, homodimer; disulfide-linked. Interacts with WFIKKN2, leading to inhibit its activity. Interacts with FSTL3. Post-translationally, synthesized as large precursor molecule that undergoes proteolytic cleavage to generate an N-terminal propeptide and a disulfide linked C-terminal dimer, which is the biologically active molecule. The circulating form consists of a latent complex of the C-terminal dimer and other proteins, including its propeptide, which maintain the C-terminal dimer in a latent, inactive state. Ligand activation requires additional cleavage of the prodomain by a tolloid-like metalloproteinase.

It localises to the secreted. Functionally, acts specifically as a negative regulator of skeletal muscle growth. This chain is Growth/differentiation factor 8 (MSTN), found in Sus scrofa (Pig).